Consider the following 122-residue polypeptide: UPF0382 membrane protein SERP0230 (122 aa).

Helical transmembrane passes span 3–23 (VFII…AFGA), 46–66 (MYHG…SINV), 69–89 (AGWL…FLAL), and 98–118 (ITPI…IATL).

The protein belongs to the UPF0382 family.

The protein localises to the cell membrane. This Staphylococcus epidermidis (strain ATCC 35984 / DSM 28319 / BCRC 17069 / CCUG 31568 / BM 3577 / RP62A) protein is UPF0382 membrane protein SERP0230.